A 270-amino-acid chain; its full sequence is Elongation factor Ts (270 aa).

Residues 76-79 (TDFV) form an involved in Mg(2+) ion dislocation from EF-Tu region.

The protein belongs to the EF-Ts family.

It is found in the cytoplasm. Its function is as follows. Associates with the EF-Tu.GDP complex and induces the exchange of GDP to GTP. It remains bound to the aminoacyl-tRNA.EF-Tu.GTP complex up to the GTP hydrolysis stage on the ribosome. In Corynebacterium aurimucosum (strain ATCC 700975 / DSM 44827 / CIP 107346 / CN-1) (Corynebacterium nigricans), this protein is Elongation factor Ts.